Consider the following 503-residue polypeptide: Cytochrome P450 11B2, mitochondrial (503 aa).

A mitochondrion-targeting transit peptide spans 1-24 (MALRAKAEVCVAAPWLSLQRARAL). F381 lines the 21-hydroxyprogesterone pocket. Residue C450 participates in heme binding.

The protein belongs to the cytochrome P450 family. Requires heme as cofactor. Expressed sporadically in the zona glomerulosa (zG) of the adrenal cortex (conventional zonation), as well as in aldosterone-producing cell clusters (APCCs) composed of morphological zG cells in contact with the capsule (variegated zonation).

It localises to the mitochondrion inner membrane. It carries out the reaction a steroid + 2 reduced [adrenodoxin] + O2 + 2 H(+) = an 11beta-hydroxysteroid + 2 oxidized [adrenodoxin] + H2O. The enzyme catalyses 21-hydroxyprogesterone + 2 reduced [adrenodoxin] + O2 + 2 H(+) = corticosterone + 2 oxidized [adrenodoxin] + H2O. It catalyses the reaction corticosterone + 2 reduced [adrenodoxin] + O2 + 2 H(+) = 18-hydroxycorticosterone + 2 oxidized [adrenodoxin] + H2O. The catalysed reaction is 18-hydroxycorticosterone + 2 reduced [adrenodoxin] + O2 + 2 H(+) = aldosterone + 2 oxidized [adrenodoxin] + 2 H2O. It carries out the reaction 11-deoxycortisol + 2 reduced [adrenodoxin] + O2 + 2 H(+) = cortisol + 2 oxidized [adrenodoxin] + H2O. The enzyme catalyses 21-hydroxyprogesterone + 2 reduced [adrenodoxin] + O2 + 2 H(+) = 18-hydroxy-11-deoxycorticosterone + 2 oxidized [adrenodoxin] + H2O. It catalyses the reaction cortisol + 2 reduced [adrenodoxin] + O2 + 2 H(+) = 18-hydroxycortisol + 2 oxidized [adrenodoxin] + H2O. The catalysed reaction is 18-hydroxycortisol + 2 reduced [adrenodoxin] + O2 + 2 H(+) = 18-oxocortisol + 2 oxidized [adrenodoxin] + 2 H2O. Its pathway is steroid biosynthesis. A cytochrome P450 monooxygenase that catalyzes the biosynthesis of aldosterone, the main mineralocorticoid in the human body responsible for salt and water homeostasis, thus involved in blood pressure regulation, arterial hypertension, and the development of heart failure. Catalyzes three sequential oxidative reactions of 11-deoxycorticosterone (21-hydroxyprogesterone), namely 11-beta hydroxylation, followed by two successive oxidations at C18 yielding 18-hydroxy and then 18-oxo intermediates (that would not leave the enzyme active site during the consecutive hydroxylation reactions), ending with the formation of aldosterone. Can also produce 18-hydroxycortisol and 18-oxocortisol, derived from successive oxidations of cortisol at C18, normally found at very low levels, but significantly increased in primary aldosteronism, the most common form of secondary hypertension. Mechanistically, uses molecular oxygen inserting one oxygen atom into a substrate and reducing the second into a water molecule. Two electrons are provided by NADPH via a two-protein mitochondrial transfer system comprising flavoprotein FDXR (adrenodoxin/ferredoxin reductase) and nonheme iron-sulfur protein FDX1 or FDX2 (adrenodoxin/ferredoxin). Could also be involved in the androgen metabolic pathway. In Homo sapiens (Human), this protein is Cytochrome P450 11B2, mitochondrial.